The sequence spans 300 residues: Ribosomal RNA small subunit methyltransferase H (300 aa).

Residues 46–48 (GGH), D65, F92, D107, and Q114 contribute to the S-adenosyl-L-methionine site.

Belongs to the methyltransferase superfamily. RsmH family.

Its subcellular location is the cytoplasm. The enzyme catalyses cytidine(1402) in 16S rRNA + S-adenosyl-L-methionine = N(4)-methylcytidine(1402) in 16S rRNA + S-adenosyl-L-homocysteine + H(+). Its function is as follows. Specifically methylates the N4 position of cytidine in position 1402 (C1402) of 16S rRNA. This is Ribosomal RNA small subunit methyltransferase H from Prochlorococcus marinus (strain MIT 9515).